The following is a 302-amino-acid chain: Methionyl-tRNA formyltransferase (302 aa).

Residue 103–106 participates in (6S)-5,6,7,8-tetrahydrofolate binding; sequence SLLP.

Belongs to the Fmt family.

The catalysed reaction is L-methionyl-tRNA(fMet) + (6R)-10-formyltetrahydrofolate = N-formyl-L-methionyl-tRNA(fMet) + (6S)-5,6,7,8-tetrahydrofolate + H(+). Functionally, attaches a formyl group to the free amino group of methionyl-tRNA(fMet). The formyl group appears to play a dual role in the initiator identity of N-formylmethionyl-tRNA by promoting its recognition by IF2 and preventing the misappropriation of this tRNA by the elongation apparatus. The sequence is that of Methionyl-tRNA formyltransferase from Pseudothermotoga lettingae (strain ATCC BAA-301 / DSM 14385 / NBRC 107922 / TMO) (Thermotoga lettingae).